The following is a 96-amino-acid chain: Protein Vpr (96 aa).

The homooligomerization stretch occupies residues 1–42; it reads MEQAPEDQGPQREPYNEWTLELLEELKSEAVRHFPRIWLHNL. Phosphoserine; by host is present on residues Ser-79, Ser-94, and Ser-96.

It belongs to the HIV-1 VPR protein family. As to quaternary structure, homooligomer, may form homodimer. Interacts with p6-gag region of the Pr55 Gag precursor protein through a (Leu-X-X)4 motif near the C-terminus of the P6gag protein. Interacts with host UNG. May interact with host RAD23A/HHR23A. Interacts with host VPRBP/DCAF1, leading to hijack the CUL4A-RBX1-DDB1-DCAF1/VPRBP complex, mediating ubiquitination of host proteins such as TERT and ZGPAT and arrest of the cell cycle in G2 phase. Post-translationally, phosphorylated on several residues by host. These phosphorylations regulate VPR activity for the nuclear import of the HIV-1 pre-integration complex.

It is found in the virion. The protein resides in the host nucleus. The protein localises to the host extracellular space. Functionally, during virus replication, may deplete host UNG protein, and incude G2-M cell cycle arrest. Acts by targeting specific host proteins for degradation by the 26S proteasome, through association with the cellular CUL4A-DDB1 E3 ligase complex by direct interaction with host VPRPB/DCAF-1. Cell cycle arrest reportedly occurs within hours of infection and is not blocked by antiviral agents, suggesting that it is initiated by the VPR carried into the virion. Additionally, VPR induces apoptosis in a cell cycle dependent manner suggesting that these two effects are mechanistically linked. Detected in the serum and cerebrospinal fluid of AIDS patient, VPR may also induce cell death to bystander cells. In terms of biological role, during virus entry, plays a role in the transport of the viral pre-integration (PIC) complex to the host nucleus. This function is crucial for viral infection of non-dividing macrophages. May act directly at the nuclear pore complex, by binding nucleoporins phenylalanine-glycine (FG)-repeat regions. This Homo sapiens (Human) protein is Protein Vpr.